Reading from the N-terminus, the 90-residue chain is Co-chaperonin GroES (90 aa).

Belongs to the GroES chaperonin family. As to quaternary structure, heptamer of 7 subunits arranged in a ring. Interacts with the chaperonin GroEL.

It is found in the cytoplasm. Its function is as follows. Together with the chaperonin GroEL, plays an essential role in assisting protein folding. The GroEL-GroES system forms a nano-cage that allows encapsulation of the non-native substrate proteins and provides a physical environment optimized to promote and accelerate protein folding. GroES binds to the apical surface of the GroEL ring, thereby capping the opening of the GroEL channel. This is Co-chaperonin GroES from Thermosipho africanus (strain TCF52B).